The sequence spans 123 residues: MSSLLLSDVLSYGIFGFSALCVQAHLTSKFTPSFSRNLEEKLPLHNKAVFWWLGISDSALRYVFVSINIAVCVLLWSPELRSFGLKFTLGLLGVGFYSDMKLGESPIPHLLLVSTVGAAILVR.

Residues 1–24 (MSSLLLSDVLSYGIFGFSALCVQA) form the signal peptide. A run of 2 helical transmembrane segments spans residues 58–78 (SALR…LWSP) and 102–122 (LGES…AILV).

Belongs to the cyclic ether formation enzyme xenC family.

The protein resides in the membrane. It participates in mycotoxin biosynthesis. Functionally, cyclic ether formation enzyme; part of the gene cluster that mediates the biosynthesis of xenoacremones such as xenoacremone A, a compound that shows inhibitory activity toward the PI3K/AKT signaling pathway and which has the ability to induce apoptosis of A549 lung cancer cells. Within the pathway, cooperation of the hybrid PKS-NRPS xenE and the trans-acting enoyl reductase xenG is responsible for the formation of the reduced tyrosine-nonaketide derivative. The alpha/beta hydrolase xenA then accelerates intramolecular nucleophilic attack to give a pyrrolidone derivative. Subsequently, three enzymes, xenF, xenD, and xenC, coordinately participate in the conversion to xenoacremone B. XenF catalyzes sigmatropic rearrangement to form an A-ring, which leads to an unusual intermediate with a hexane ring, which is required for the formation of the tricarbocyclic product. Epoxidation catalyzed by xenD and the formation of the paracyclophane ether catalyzed by xenC initiate a spontaneous intramolecular Diels-Alder (IMDA) reaction to yield xenoacremone B. Spontaneous hydration of xenoacremone B leads to the formation of xenoacremone A, which undergoes subsequent methylation to afford xenoacremone C. This Xenoacremonium sinensis (Endophyte fungus) protein is Cyclic ether formation enzyme xenC.